Consider the following 195-residue polypeptide: HTH-type transcriptional regulator BetI (195 aa).

Residues 8-68 enclose the HTH tetR-type domain; the sequence is EIRRAQLIDA…ATMRHVLRDL (61 aa). Positions 31–50 form a DNA-binding region, H-T-H motif; it reads TLASVAQRANISTGIVSHYF.

It participates in amine and polyamine biosynthesis; betaine biosynthesis via choline pathway [regulation]. Functionally, repressor involved in the biosynthesis of the osmoprotectant glycine betaine. It represses transcription of the choline transporter BetT and the genes of BetAB involved in the synthesis of glycine betaine. In Burkholderia mallei (strain NCTC 10247), this protein is HTH-type transcriptional regulator BetI.